A 211-amino-acid polypeptide reads, in one-letter code: Dual specificity protein phosphatase 26 (211 aa).

The Tyrosine-protein phosphatase domain maps to 60–207 (NHADEVWPGL…LLALDRRLRQ (148 aa)). Cys152 functions as the Phosphocysteine intermediate in the catalytic mechanism.

This sequence belongs to the protein-tyrosine phosphatase family. Non-receptor class dual specificity subfamily. Interacts with HSF4.

It localises to the cytoplasm. It is found in the nucleus. The protein localises to the golgi apparatus. It catalyses the reaction O-phospho-L-tyrosyl-[protein] + H2O = L-tyrosyl-[protein] + phosphate. It carries out the reaction O-phospho-L-seryl-[protein] + H2O = L-seryl-[protein] + phosphate. The catalysed reaction is O-phospho-L-threonyl-[protein] + H2O = L-threonyl-[protein] + phosphate. Inactivates MAPK1 and MAPK3 which leads to dephosphorylation of heat shock factor protein 4 and a reduction in its DNA-binding activity. This chain is Dual specificity protein phosphatase 26 (DUSP26), found in Pongo abelii (Sumatran orangutan).